Reading from the N-terminus, the 858-residue chain is Translation initiation factor IF-2 (858 aa).

Residues 59–147 (KEHAEKRRER…GKKLEGQERK (89 aa)) are disordered. Positions 361–530 (PRPPVVVVMG…LLVADLLELK (170 aa)) constitute a tr-type G domain. Residues 370-377 (GHVDHGKT) are G1. Residue 370–377 (GHVDHGKT) participates in GTP binding. The interval 395–399 (GITQH) is G2. The tract at residues 416–419 (DTPG) is G3. GTP-binding positions include 416–420 (DTPGH) and 470–473 (NKID). The G4 stretch occupies residues 470 to 473 (NKID). Positions 506 to 508 (SAK) are G5.

The protein belongs to the TRAFAC class translation factor GTPase superfamily. Classic translation factor GTPase family. IF-2 subfamily.

The protein localises to the cytoplasm. Functionally, one of the essential components for the initiation of protein synthesis. Protects formylmethionyl-tRNA from spontaneous hydrolysis and promotes its binding to the 30S ribosomal subunits. Also involved in the hydrolysis of GTP during the formation of the 70S ribosomal complex. This Caldicellulosiruptor saccharolyticus (strain ATCC 43494 / DSM 8903 / Tp8T 6331) protein is Translation initiation factor IF-2.